A 632-amino-acid chain; its full sequence is MAU2 chromatid cohesion factor homolog (632 aa).

TPR repeat units lie at residues 453–486 and 493–526; these read GGFYYVQGLHAFHKNSFHEAKRFLRETLKMANAE and SCSLVLLSHVFLSIGNSKESMNMVTPAMQLASKI.

This sequence belongs to the SCC4/mau-2 family. Interacts with Nipped-B to form the cohesin loading complex.

It localises to the nucleus. It is found in the nucleoplasm. In terms of biological role, required for association of the cohesin complex with chromatin during interphase. Plays a role in sister chromatid cohesion and normal progression through prometaphase. This chain is MAU2 chromatid cohesion factor homolog, found in Drosophila yakuba (Fruit fly).